Consider the following 548-residue polypeptide: Chaperonin GroEL 2 (548 aa).

Residues 30-33 (TLGP), K51, 87-91 (DGTTT), G415, 479-481 (NAA), and D495 contribute to the ATP site. The tract at residues 524–548 (APKDAPPTAPAGVPGAGAGGPGFDF) is disordered. Over residues 537–548 (PGAGAGGPGFDF) the composition is skewed to gly residues.

This sequence belongs to the chaperonin (HSP60) family. Forms a cylinder of 14 subunits composed of two heptameric rings stacked back-to-back. Interacts with the co-chaperonin GroES.

It is found in the cytoplasm. The catalysed reaction is ATP + H2O + a folded polypeptide = ADP + phosphate + an unfolded polypeptide.. In terms of biological role, together with its co-chaperonin GroES, plays an essential role in assisting protein folding. The GroEL-GroES system forms a nano-cage that allows encapsulation of the non-native substrate proteins and provides a physical environment optimized to promote and accelerate protein folding. The chain is Chaperonin GroEL 2 from Burkholderia pseudomallei (strain 668).